The sequence spans 77 residues: Putative Fis-like DNA-binding protein (77 aa).

The H-T-H motif DNA-binding region spans glutamine 53–glutamine 72.

This sequence belongs to the transcriptional regulatory Fis family.

The chain is Putative Fis-like DNA-binding protein from Ralstonia nicotianae (strain ATCC BAA-1114 / GMI1000) (Ralstonia solanacearum).